We begin with the raw amino-acid sequence, 132 residues long: uncharacterized protein (132 aa).

In terms of biological role, the presence of the two linear plasmids, termed pGKL1 and pGKL2, in strains of Kluyveromyces lactis confers the killer phenotype to the host cell, by promoting the secretion of a toxin able to inhibit the growth of sensitive strains. This is an uncharacterized protein from Kluyveromyces lactis (strain ATCC 8585 / CBS 2359 / DSM 70799 / NBRC 1267 / NRRL Y-1140 / WM37) (Yeast).